A 305-amino-acid chain; its full sequence is 4-diphosphocytidyl-2-C-methyl-D-erythritol kinase (305 aa).

The active site involves Lys-15. 99–109 (PMGGGIGGGSS) contacts ATP. The active site involves Asp-141.

Belongs to the GHMP kinase family. IspE subfamily.

It carries out the reaction 4-CDP-2-C-methyl-D-erythritol + ATP = 4-CDP-2-C-methyl-D-erythritol 2-phosphate + ADP + H(+). The protein operates within isoprenoid biosynthesis; isopentenyl diphosphate biosynthesis via DXP pathway; isopentenyl diphosphate from 1-deoxy-D-xylulose 5-phosphate: step 3/6. In terms of biological role, catalyzes the phosphorylation of the position 2 hydroxy group of 4-diphosphocytidyl-2C-methyl-D-erythritol. The polypeptide is 4-diphosphocytidyl-2-C-methyl-D-erythritol kinase (Marinomonas sp. (strain MWYL1)).